The primary structure comprises 415 residues: Squalene synthase 2 (415 aa).

Transmembrane regions (helical) follow at residues 281–301 (AIFRFCAIPQIMSIGTLALCY) and 392–412 (LIVILFIILAILYAYLSSNLP).

Belongs to the phytoene/squalene synthase family. It depends on Mg(2+) as a cofactor. Mn(2+) serves as cofactor.

Its subcellular location is the endoplasmic reticulum membrane. The enzyme catalyses 2 (2E,6E)-farnesyl diphosphate + NADH + H(+) = squalene + 2 diphosphate + NAD(+). It catalyses the reaction 2 (2E,6E)-farnesyl diphosphate + NADPH + H(+) = squalene + 2 diphosphate + NADP(+). The protein operates within terpene metabolism; lanosterol biosynthesis; lanosterol from farnesyl diphosphate: step 1/3. Component of the triterpene saponins (e.g. ginsenosides or panaxosides) and phytosterols biosynthetic pathways. Catalyzes the biosynthesis of squalene. This chain is Squalene synthase 2, found in Panax ginseng (Korean ginseng).